We begin with the raw amino-acid sequence, 1272 residues long: RING finger protein PFE0100w (1272 aa).

Residues 216–260 (INKINDVSNNDPKKDNNEKNTSSNNITHNNYNDISNNNNNNNNIN) are disordered. Positions 234-260 (KNTSSNNITHNNYNDISNNNNNNNNIN) are enriched in low complexity. A CHCR repeat occupies 608–752 (YIQTINYLET…GYKFIKYYPQ (145 aa)). A helical transmembrane segment spans residues 771–791 (IFIPLFLDNIDFLFMFIVKFL). Disordered stretches follow at residues 842–862 (NQNHNGIPSDSHNLSDDNNSQ) and 908–970 (ENQT…IINK). 2 stretches are compositionally biased toward low complexity: residues 850–861 (SDSHNLSDDNNS) and 909–956 (NQTN…IQTN). The span at 957–967 (KQKGNSTTNKI) shows a compositional bias: polar residues. Positions 1146-1182 (MNDMNKNINDKCIEIEKDKKELEKIKKKQLKKKYNFY) form a coiled coil. Residues 1189–1224 (CSICKEILSVPMIHFLCKHSYHSYCLKDNNVCILCH) form an RING-type; atypical zinc finger.

The protein localises to the membrane. This Plasmodium falciparum (isolate 3D7) protein is RING finger protein PFE0100w.